The following is a 132-amino-acid chain: Small ribosomal subunit protein uS8 (132 aa).

It belongs to the universal ribosomal protein uS8 family. As to quaternary structure, part of the 30S ribosomal subunit. Contacts proteins S5 and S12.

One of the primary rRNA binding proteins, it binds directly to 16S rRNA central domain where it helps coordinate assembly of the platform of the 30S subunit. The chain is Small ribosomal subunit protein uS8 from Ehrlichia canis (strain Jake).